A 467-amino-acid chain; its full sequence is Neutrophil collagenase (467 aa).

The first 20 residues, 1 to 20 (MFSLKTLPFLLLLHVQISKA), serve as a signal peptide directing secretion. Positions 21–100 (FPVSSKEKNT…CGVPDSGGFM (80 aa)) are cleaved as a propeptide — activation peptide. N54 and N73 each carry an N-linked (GlcNAc...) asparagine glycan. Residues 89–96 (PRCGVPDS) carry the Cysteine switch motif. C91 contacts Zn(2+). N112 carries N-linked (GlcNAc...) asparagine glycosylation. Position 157 (D157) interacts with Ca(2+). Zn(2+)-binding residues include H167 and D169. 4 residues coordinate Ca(2+): D174, G175, N177, and I179. Residue H182 participates in Zn(2+) binding. The Ca(2+) site is built by G189, G191, and D193. Zn(2+) is bound at residue H195. Ca(2+) contacts are provided by D197 and E200. N204 carries N-linked (GlcNAc...) asparagine glycosylation. Residue H217 coordinates Zn(2+). E218 is a catalytic residue. 2 residues coordinate Zn(2+): H221 and H227. N-linked (GlcNAc...) asparagine glycosylation occurs at N246. Hemopexin repeat units lie at residues 276–325 (PKPC…WPSL), 326–372 (PTGI…GFPS), 374–420 (VQAI…FPGI), and 421–464 (ESKV…WLNC). C279 and C464 are joined by a disulfide. Residue D286 coordinates Ca(2+). Ca(2+)-binding residues include D378 and D425.

Belongs to the peptidase M10A family. The cofactor is Ca(2+). Requires Zn(2+) as cofactor. As to expression, neutrophils.

The protein localises to the cytoplasmic granule. The protein resides in the secreted. It localises to the extracellular space. It is found in the extracellular matrix. The enzyme catalyses Cleavage of interstitial collagens in the triple helical domain. Unlike EC 3.4.24.7, this enzyme cleaves type III collagen more slowly than type I.. Its activity is regulated as follows. Cannot be activated without removal of the activation peptide. Its function is as follows. Can degrade fibrillar type I, II, and III collagens. The sequence is that of Neutrophil collagenase (MMP8) from Homo sapiens (Human).